Reading from the N-terminus, the 513-residue chain is Maturase K (513 aa).

The protein belongs to the intron maturase 2 family. MatK subfamily.

The protein resides in the plastid. The protein localises to the chloroplast. Functionally, usually encoded in the trnK tRNA gene intron. Probably assists in splicing its own and other chloroplast group II introns. The chain is Maturase K from Astrebla lappacea (Curly Mitchell grass).